A 374-amino-acid chain; its full sequence is N-acetyldiaminopimelate deacetylase (374 aa).

Residue Asp-68 is part of the active site. Glu-127 functions as the Proton acceptor in the catalytic mechanism.

It belongs to the peptidase M20A family. N-acetyldiaminopimelate deacetylase subfamily.

The enzyme catalyses N-acetyl-(2S,6S)-2,6-diaminopimelate + H2O = (2S,6S)-2,6-diaminopimelate + acetate. It participates in amino-acid biosynthesis; L-lysine biosynthesis via DAP pathway; LL-2,6-diaminopimelate from (S)-tetrahydrodipicolinate (acetylase route): step 3/3. Its function is as follows. Catalyzes the conversion of N-acetyl-diaminopimelate to diaminopimelate and acetate. This Shouchella clausii (strain KSM-K16) (Alkalihalobacillus clausii) protein is N-acetyldiaminopimelate deacetylase.